We begin with the raw amino-acid sequence, 140 residues long: uncharacterized protein (140 aa).

Positions K2–D140 constitute an N-acetyltransferase domain.

It belongs to the acetyltransferase family.

This is an uncharacterized protein from Bacillus subtilis (strain 168).